Here is a 647-residue protein sequence, read N- to C-terminus: Chaperone protein DnaK (647 aa).

At threonine 199 the chain carries Phosphothreonine; by autocatalysis. A disordered region spans residues 602–647 (MYAQEQAQAGQQAGPGAGSASAGQSGEKPVEGEVVDAEFEEVKDKK). Residues 604 to 627 (AQEQAQAGQQAGPGAGSASAGQSG) are compositionally biased toward low complexity.

Belongs to the heat shock protein 70 family.

Acts as a chaperone. This Nitrosomonas eutropha (strain DSM 101675 / C91 / Nm57) protein is Chaperone protein DnaK.